The following is a 120-amino-acid chain: Large ribosomal subunit protein uL18 (120 aa).

This sequence belongs to the universal ribosomal protein uL18 family. Part of the 50S ribosomal subunit; part of the 5S rRNA/L5/L18 subcomplex. In B.stearothermophilus only 2 proteins, L5 and L18 have been shown to be part of this subcomplex, unlike the case in E.coli and T.thermophilus where L25 (TL5) is also found. Post-translationally, the protein, when overexpressed in E.coli, contains a phosphoserine, which is required for the protein to bind to 5S rRNA. It has been suggested, based solely on amino acid conservation, that this occurs on Ser-57.

Its function is as follows. This is one of the proteins that bind and probably mediate the attachment of the 5S RNA into the large ribosomal subunit, where it forms part of the central protuberance. This is Large ribosomal subunit protein uL18 (rplR) from Geobacillus stearothermophilus (Bacillus stearothermophilus).